We begin with the raw amino-acid sequence, 308 residues long: Heme A synthase (308 aa).

Topologically, residues 1-8 (MFKKRNLK) are cytoplasmic. The chain crosses the membrane as a helical span at residues 9–29 (WLSILATVIMAWVQLGGALVT). The Extracellular segment spans residues 30–67 (KTGSENGCGASWPLCHGALLPQNLPIATIIELSHRATS). A disulfide bridge connects residues Cys-37 and Cys-44. Glu-60 is a catalytic residue. His-63 lines the heme o pocket. Residues 68–88 (ALSLIVVLWLVITAWKNIGYI) form a helical membrane-spanning segment. The Cytoplasmic portion of the chain corresponds to 89 to 93 (KEVKP). The chain crosses the membrane as a helical span at residues 94–114 (LCIISVAFLLIQALVGAAAVL). Topologically, residues 115–123 (WQQNDYVLA) are extracellular. The chain crosses the membrane as a helical span at residues 124–144 (LHFGISLISFSSVFVLTLIIF). His-125 is a heme o binding site. Topologically, residues 145 to 161 (DVDQKYEANKVHIDRKL) are cytoplasmic. Residues 162–182 (RIYTWTMAICLYVGIYTGALV) traverse the membrane as a helical segment. Residues 183–215 (RHTKSSLAYGSWPLPFNDLIPHTEQDWVQLAHR) are Extracellular-facing. His-214 contacts heme b. The helical transmembrane segment at 216 to 236 (TLALIASISVFLAFNYAIKHY) threads the bilayer. Residues 237–244 (QNNRTIRY) lie on the Cytoplasmic side of the membrane. The helical transmembrane segment at 245–265 (GYTAALLLIILQIVTGALSIF) threads the bilayer. At 266–270 (THVNL) the chain is on the extracellular side. The chain crosses the membrane as a helical span at residues 271-291 (IIALLHALIITFEFGLIAYLI). His-276 contacts heme b. Over 292–308 (VLLLRSQRVEKVKQNAY) the chain is Cytoplasmic.

Belongs to the COX15/CtaA family. Type 1 subfamily. As to quaternary structure, interacts with CtaB. Heme b serves as cofactor.

Its subcellular location is the cell membrane. The catalysed reaction is Fe(II)-heme o + 2 A + H2O = Fe(II)-heme a + 2 AH2. It functions in the pathway porphyrin-containing compound metabolism; heme A biosynthesis; heme A from heme O: step 1/1. Its function is as follows. Catalyzes the conversion of heme O to heme A by two successive hydroxylations of the methyl group at C8. The first hydroxylation forms heme I, the second hydroxylation results in an unstable dihydroxymethyl group, which spontaneously dehydrates, resulting in the formyl group of heme A. This is Heme A synthase from Staphylococcus carnosus (strain TM300).